We begin with the raw amino-acid sequence, 636 residues long: Sodium-dependent proline transporter (636 aa).

The Cytoplasmic portion of the chain corresponds to M1 to D45. Position 20 is a phosphothreonine (T20). S22 is modified (phosphoserine). A run of 3 helical transmembrane segments spans residues F46–R66, A74–L93, and G117–I137. Over A138 to R214 the chain is Extracellular. N182 is a glycosylation site (N-linked (GlcNAc...) asparagine). Transmembrane regions (helical) follow at residues W215–L233, V242–V259, I295–Y312, F324–L345, L378–L397, V425–T443, S459–I479, A500–V519, and L538–V556. The Cytoplasmic portion of the chain corresponds to A557–M636. Phosphoserine occurs at positions 573 and 582. T588 is modified (phosphothreonine). Y591 bears the Phosphotyrosine mark. S598 and S600 each carry phosphoserine.

This sequence belongs to the sodium:neurotransmitter symporter (SNF) (TC 2.A.22) family. SLC6A7 subfamily. In terms of tissue distribution, brain specific (at protein level). Highly expressed in hippocampus, corpus striatum and temporal cortex. Also expressed in frontal cortex, occipital cortex and, at lower levels, in cerebellum and parietal cortex (at protein level).

It is found in the synaptic cell membrane. The enzyme catalyses L-proline(out) + chloride(out) + 2 Na(+)(out) = L-proline(in) + chloride(in) + 2 Na(+)(in). It catalyses the reaction L-pipecolate(out) + chloride(out) + 2 Na(+)(out) = L-pipecolate(in) + chloride(in) + 2 Na(+)(in). Its function is as follows. Brain specific sodium (and chloride)-dependent proline transporter. Terminates the action of proline by its high affinity sodium-dependent reuptake into presynaptic terminals. This chain is Sodium-dependent proline transporter, found in Homo sapiens (Human).